Consider the following 240-residue polypeptide: 1-(5-phosphoribosyl)-5-[(5-phosphoribosylamino)methylideneamino] imidazole-4-carboxamide isomerase (240 aa).

The active-site Proton acceptor is the D8. D130 serves as the catalytic Proton donor.

The protein belongs to the HisA/HisF family.

The protein resides in the cytoplasm. The enzyme catalyses 1-(5-phospho-beta-D-ribosyl)-5-[(5-phospho-beta-D-ribosylamino)methylideneamino]imidazole-4-carboxamide = 5-[(5-phospho-1-deoxy-D-ribulos-1-ylimino)methylamino]-1-(5-phospho-beta-D-ribosyl)imidazole-4-carboxamide. Its pathway is amino-acid biosynthesis; L-histidine biosynthesis; L-histidine from 5-phospho-alpha-D-ribose 1-diphosphate: step 4/9. This is 1-(5-phosphoribosyl)-5-[(5-phosphoribosylamino)methylideneamino] imidazole-4-carboxamide isomerase from Elusimicrobium minutum (strain Pei191).